Here is a 397-residue protein sequence, read N- to C-terminus: Lysophospholipid transporter LplT (397 aa).

Residues 1–17 (MSESVHTNTSLWSKGMK) are Periplasmic-facing. Residues 18–38 (AVIVAQFLSAFGDNALLFATL) form a helical membrane-spanning segment. Residues 39–52 (ALLNAQFYPEWSQP) lie on the Cytoplasmic side of the membrane. Residues 53 to 73 (ILQMVFVGAYILFAPFVGQVA) form a helical membrane-spanning segment. Residues 74 to 90 (DSFAKGRVMMFANGLKL) lie on the Periplasmic side of the membrane. Residues 91–111 (LGAASICFGINPFLGYTLVGV) form a helical membrane-spanning segment. Topologically, residues 112-144 (GAAAYSPAKYGILGELTTGSKLVKANGLMEAST) are cytoplasmic. Residues 145 to 165 (IAAILLGSVAGGVLADWHVLV) traverse the membrane as a helical segment. Position 166 (A166) is a topological domain, periplasmic. A helical transmembrane segment spans residues 167-187 (LAACALAYGGAVVANIYIPKL). Residues 188-226 (AAARPGQSWNLINMTRSFLNACTSLWRNGETRFSLVGTS) are Cytoplasmic-facing. The chain crosses the membrane as a helical span at residues 227–247 (LFWGAGVTLRFLLVLWVPVAL). Topologically, residues 248–256 (GITDNATPT) are periplasmic. A helical membrane pass occupies residues 257 to 277 (YLNAMVAIGIVVGAGAAAKLV). Topologically, residues 278–280 (TLE) are cytoplasmic. The chain crosses the membrane as a helical span at residues 281 to 301 (TVSRCMPAGILIGVVVLIFSL). The Periplasmic segment spans residues 302-304 (QHE). The helical transmembrane segment at 305–325 (LLPAYALLMLIGVMGGFFVVP) threads the bilayer. Over 326–343 (LNALLQERGKKSVGAGNA) the chain is Cytoplasmic. Residues 344–364 (IAVQNLGENSAMLLMLGIYSL) traverse the membrane as a helical segment. At 365 to 366 (AV) the chain is on the periplasmic side. The helical transmembrane segment at 367–387 (MIGIPVVPIGIGFGALFALAI) threads the bilayer. Residues 388-397 (TALWIWQRRH) lie on the Cytoplasmic side of the membrane.

Belongs to the major facilitator superfamily. LplT (TC 2.A.1.42) family.

The protein localises to the cell inner membrane. Functionally, catalyzes the facilitated diffusion of 2-acyl-glycero-3-phosphoethanolamine (2-acyl-GPE) into the cell. The sequence is that of Lysophospholipid transporter LplT from Escherichia coli (strain SE11).